The sequence spans 436 residues: Type II methyltransferase M.BsuRI (436 aa).

Residues 59–409 (INVLSLFSGC…SPIANWAINY (351 aa)) enclose the SAM-dependent MTase C5-type domain. The active site involves Cys-157.

This sequence belongs to the class I-like SAM-binding methyltransferase superfamily. C5-methyltransferase family. In terms of assembly, monomer.

It carries out the reaction a 2'-deoxycytidine in DNA + S-adenosyl-L-methionine = a 5-methyl-2'-deoxycytidine in DNA + S-adenosyl-L-homocysteine + H(+). In terms of biological role, a methylase, recognizes the double-stranded sequence 5'-GGCC-3', methylates C-3 on both strands, and protects the DNA from cleavage by the BsuRI endonuclease. In Bacillus subtilis, this protein is Type II methyltransferase M.BsuRI (hsdRM).